The sequence spans 264 residues: LIMR family protein SELMODRAFT_416716 (264 aa).

The next 4 helical transmembrane spans lie at 23-43 (VVILLTVLCLLLGFLYAVIGY), 96-116 (ILFTMFGGVGMATLPLSLIFA), 194-214 (IIWLLHIIVFMLVNPPAFPFL), and 225-245 (WGLLGTTTFAIFCYYLVMSVI).

It belongs to the LIMR family.

The protein localises to the membrane. In Selaginella moellendorffii (Spikemoss), this protein is LIMR family protein SELMODRAFT_416716.